We begin with the raw amino-acid sequence, 301 residues long: Thyrotroph embryonic factor (301 aa).

2 disordered regions span residues Met1–Met70 and Glu130–Cys174. Ser30 is modified (phosphoserine). Over residues Lys39 to Leu59 the composition is skewed to basic and acidic residues. A compositionally biased stretch (low complexity) spans Ser131 to Ser158. Residues Asp231–Tyr294 form the bZIP domain. A basic motif region spans residues Lys233–Arg253. Residues Leu254–Ile261 are leucine-zipper.

The protein belongs to the bZIP family. PAR subfamily. Binds DNA as a homodimer or a heterodimer. Can form a heterodimer with DBP. As to expression, isoform Alpha and isoform Beta are expressed at high levels in lung, bladder, kidney, gut and brain.

The protein resides in the nucleus. Its function is as follows. Transcription factor that binds to and transactivates the TSHB promoter. Binds to a minimal DNA-binding sequence 5'-[TC][AG][AG]TTA[TC][AG]-3'. Also activates the telokin promoter in smooth muscle-specific and calcium-dependent manner. This Mus musculus (Mouse) protein is Thyrotroph embryonic factor (Tef).